Here is a 156-residue protein sequence, read N- to C-terminus: Ribosome maturation factor RimP (156 aa).

It belongs to the RimP family.

It localises to the cytoplasm. Its function is as follows. Required for maturation of 30S ribosomal subunits. The protein is Ribosome maturation factor RimP of Dictyoglomus turgidum (strain DSM 6724 / Z-1310).